Consider the following 134-residue polypeptide: Transcription antitermination protein NusB (134 aa).

Belongs to the NusB family.

Functionally, involved in transcription antitermination. Required for transcription of ribosomal RNA (rRNA) genes. Binds specifically to the boxA antiterminator sequence of the ribosomal RNA (rrn) operons. This chain is Transcription antitermination protein NusB, found in Shewanella sp. (strain MR-4).